The sequence spans 574 residues: Galactose transporter (574 aa).

The interval 1-57 (MAVEENNMPVVSQQPQAGEDVISSLSKDSHLSAQSQKYSNDELKAGESGSEGSQSVP) is disordered. The Cytoplasmic segment spans residues 1-70 (MAVEENNMPV…PKKPMSEYVT (70 aa)). Over residues 23 to 38 (SSLSKDSHLSAQSQKY) the composition is skewed to polar residues. Phosphoserine occurs at positions 32, 35, 39, 48, 50, 53, and 55. A helical transmembrane segment spans residues 71 to 91 (VSLLCLCVAFGGFMFGWDTGT). Residues 92–121 (ISGFVVQTDFLRRFGMKHKDGTHYLSNVRT) lie on the Extracellular side of the membrane. A helical transmembrane segment spans residues 122-142 (GLIVAIFNIGCAFGGIILSKG). The Cytoplasmic portion of the chain corresponds to 143–149 (GDMYGRK). A helical transmembrane segment spans residues 150–170 (KGLSIVVSVYIVGIIIQIASI). Residues 171–175 (NKWYQ) lie on the Extracellular side of the membrane. The chain crosses the membrane as a helical span at residues 176-196 (YFIGRIISGLGVGGIAVLCPM). Residues 197 to 207 (LISEIAPKHLR) are Cytoplasmic-facing. The helical transmembrane segment at 208–228 (GTLVSCYQLMITAGIFLGYCT) threads the bilayer. Residues 229–242 (NYGTKSYSNSVQWR) lie on the Extracellular side of the membrane. A helical transmembrane segment spans residues 243–263 (VPLGLCFAWSLFMIGALTLVP). At 264–342 (ESPRYLCEVN…MGVFVQMFQQ (79 aa)) the chain is on the cytoplasmic side. A helical transmembrane segment spans residues 343-362 (LTGNNYFFYYGTVIFKSVGL). The Extracellular portion of the chain corresponds to 363–366 (DDSF). Residues 367–387 (ETSIVIGVVNFASTFFSLWTV) traverse the membrane as a helical segment. The Cytoplasmic portion of the chain corresponds to 388 to 394 (ENLGHRK). The helical transmembrane segment at 395–415 (CLLLGAATMMACMVIYASVGV) threads the bilayer. The Extracellular segment spans residues 416-435 (TRLYPHGKSQPSSKGAGNCM). Residues 436–456 (IVFTCFYIFCYATTWAPVAWV) traverse the membrane as a helical segment. The Cytoplasmic segment spans residues 457 to 472 (ITAESFPLRVKSKCMA). Residues 473–493 (LASASNWVWGFLIAFFTPFIT) traverse the membrane as a helical segment. Residues 494-499 (SAINFY) are Extracellular-facing. A helical membrane pass occupies residues 500–520 (YGYVFMGCLVAMFFYVFFFVP). The Cytoplasmic portion of the chain corresponds to 521 to 574 (ETKGLSLEEIQELWEEGVLPWKSEGWIPSSRRGNNYDLEDLQHDDKPWYKAMLE).

Belongs to the major facilitator superfamily. Sugar transporter (TC 2.A.1.1) family.

It localises to the membrane. Functionally, GAL2 is a facilitated diffusion transporter required for both the high-affinity galactokinase-dependent and low-affinity galactokinase-independent galactose transport processes. In Saccharomyces cerevisiae (strain ATCC 204508 / S288c) (Baker's yeast), this protein is Galactose transporter (GAL2).